The sequence spans 264 residues: MAVLSMKQLLEAGVHFGHQTRRWNPKMKKFIFTERNGIYIIDLQKTVRMVDDAYDFVKEEAANEGVFLFVGTKKQAQDAIAEESVRAGQYFVNHRWLGGTLTNWDTIQKRIKRLKEIKAMDEDGTFERLPKKEVALLKKQQEKLEKFLGGIEDMPRIPDVMFVVDPRKERIAIKEAQKLNIPVVAMVDTNSDPDDIDVIIPSNDDAIRAVRLITAKMADAIIEGRQGEDDVEEATFAAENKSADSMEEIVEAVEGNNDTNTDAK.

The protein belongs to the universal ribosomal protein uS2 family.

This chain is Small ribosomal subunit protein uS2, found in Latilactobacillus sakei subsp. sakei (strain 23K) (Lactobacillus sakei subsp. sakei).